Here is a 184-residue protein sequence, read N- to C-terminus: Large ribosomal subunit protein uL6 (184 aa).

This sequence belongs to the universal ribosomal protein uL6 family. As to quaternary structure, part of the 50S ribosomal subunit.

Its function is as follows. This protein binds to the 23S rRNA, and is important in its secondary structure. It is located near the subunit interface in the base of the L7/L12 stalk, and near the tRNA binding site of the peptidyltransferase center. The protein is Large ribosomal subunit protein uL6 of Mycoplasma pneumoniae (strain ATCC 29342 / M129 / Subtype 1) (Mycoplasmoides pneumoniae).